The following is a 551-amino-acid chain: Interleukin-2 receptor subunit beta (551 aa).

An N-terminal signal peptide occupies residues 1 to 26 (MATLALSWCLPLLILLLPLATSSASA). The Extracellular segment spans residues 27–240 (AVNGTSRFTC…TKPAALGKDT (214 aa)). Residues Asn-29, Asn-43, and Asn-71 are each glycosylated (N-linked (GlcNAc...) asparagine). A disulfide bond links Cys-36 and Cys-46. Cys-74 and Cys-86 form a disulfide bridge. The Fibronectin type-III domain maps to 134-234 (APISLQVVHV…QPLAFRTKPA (101 aa)). Asn-149 carries an N-linked (GlcNAc...) asparagine glycan. Residues 220–224 (WSPWS) carry the WSXWS motif motif. Residues 241 to 265 (IPWLGHLLVGLSGAFGFIILVYLLI) traverse the membrane as a helical segment. Over 266-551 (NCRNTGPWLK…LQDQDPTHLV (286 aa)) the chain is Cytoplasmic. Positions 278–286 (LKCHTPDPS) match the Box 1 motif motif. Disordered stretches follow at residues 389–417 (EEEP…EDDA), 430–484 (FSPS…DLVD), and 496–517 (AGEQ…ARPP).

Belongs to the type I cytokine receptor family. Type 4 subfamily. In terms of assembly, non-covalent dimer of an alpha and a beta subunit. IL2R exists in 3 different forms: a high affinity dimer, an intermediate affinity monomer (beta subunit), and a low affinity monomer (alpha subunit). The high and intermediate affinity forms also associate with a gamma subunit. Interacts with SHB upon interleukin stimulation.

The protein localises to the cell membrane. It is found in the cell surface. In terms of biological role, receptor for interleukin-2. This beta subunit is involved in receptor mediated endocytosis and transduces the mitogenic signals of IL2. Probably in association with IL15RA, involved in the stimulation of neutrophil phagocytosis by IL15. In Macaca fascicularis (Crab-eating macaque), this protein is Interleukin-2 receptor subunit beta (IL2RB).